Consider the following 119-residue polypeptide: Large ribosomal subunit protein bL20 (119 aa).

It belongs to the bacterial ribosomal protein bL20 family.

Binds directly to 23S ribosomal RNA and is necessary for the in vitro assembly process of the 50S ribosomal subunit. It is not involved in the protein synthesizing functions of that subunit. This chain is Large ribosomal subunit protein bL20, found in Buchnera aphidicola subsp. Cinara cedri (strain Cc).